A 247-amino-acid chain; its full sequence is Eukaryotic translation initiation factor 6-1 (247 aa).

This sequence belongs to the eIF-6 family. Monomer. Associates with the 60S ribosomal subunit.

It localises to the cytoplasm. The protein localises to the nucleus. Its subcellular location is the nucleolus. Binds to the 60S ribosomal subunit and prevents its association with the 40S ribosomal subunit to form the 80S initiation complex in the cytoplasm. May also be involved in ribosome biogenesis. The sequence is that of Eukaryotic translation initiation factor 6-1 from Arabidopsis thaliana (Mouse-ear cress).